Consider the following 367-residue polypeptide: Gibberellin 20 oxidase 3 (367 aa).

Residues 198–304 (DGDPVMRLNH…RRSLTFFLNP (107 aa)) form the Fe2OG dioxygenase domain. Residue Tyr-208 coordinates 2-oxoglutarate. Fe cation contacts are provided by His-223, Asp-225, and His-285. 2 residues coordinate 2-oxoglutarate: Arg-295 and Ser-297.

Belongs to the iron/ascorbate-dependent oxidoreductase family. Fe(2+) is required as a cofactor. The cofactor is L-ascorbate.

It carries out the reaction gibberellin A12 + 2 2-oxoglutarate + 3 O2 + H(+) = gibberellin A9 + 2 succinate + 3 CO2 + 2 H2O. The enzyme catalyses gibberellin A53 + 2 2-oxoglutarate + 3 O2 + H(+) = gibberellin A20 + 2 succinate + 3 CO2 + 2 H2O. Functionally, key oxidase enzyme in the biosynthesis of gibberellin. Catalyzes the formation of bioactive gibberellins (GAs) via a three-step oxidation at C-20 of the GA skeleton. Controls the elongation of the vegetative shoot and plant height by the regulation of active gibberellin levels. The polypeptide is Gibberellin 20 oxidase 3 (Oryza sativa subsp. japonica (Rice)).